Consider the following 160-residue polypeptide: Major strawberry allergen Fra a 1.04 (160 aa).

Belongs to the BetVI family. Post-translationally, phosphorylated in vivo. Phosphorylation prevents its activity as ribonuclease. Highly expressed in roots. Expressed a low levels in ripe red fruits.

Functionally, possesses ribonuclease activity in vitro. The sequence is that of Major strawberry allergen Fra a 1.04 from Fragaria ananassa (Strawberry).